Consider the following 335-residue polypeptide: UPF0284 protein TON_0688 (335 aa).

This sequence belongs to the UPF0284 family.

This Thermococcus onnurineus (strain NA1) protein is UPF0284 protein TON_0688.